A 223-amino-acid chain; its full sequence is 7-cyano-7-deazaguanine synthase (223 aa).

ATP is bound at residue 11 to 21 (ISGGMDSALAA). The Zn(2+) site is built by cysteine 189, cysteine 197, cysteine 200, and cysteine 203.

It belongs to the QueC family. Requires Zn(2+) as cofactor.

The catalysed reaction is 7-carboxy-7-deazaguanine + NH4(+) + ATP = 7-cyano-7-deazaguanine + ADP + phosphate + H2O + H(+). The protein operates within purine metabolism; 7-cyano-7-deazaguanine biosynthesis. Catalyzes the ATP-dependent conversion of 7-carboxy-7-deazaguanine (CDG) to 7-cyano-7-deazaguanine (preQ(0)). This is 7-cyano-7-deazaguanine synthase from Campylobacter fetus subsp. fetus (strain 82-40).